We begin with the raw amino-acid sequence, 381 residues long: Sulfate/thiosulfate import ATP-binding protein CysA (381 aa).

Positions 3 to 233 (ILVYEVSKSL…PIDYFVGIFS (231 aa)) constitute an ABC transporter domain. 35 to 42 (GPSGSGKS) contributes to the ATP binding site.

The protein belongs to the ABC transporter superfamily. Sulfate/tungstate importer (TC 3.A.1.6) family.

Its subcellular location is the plastid. The protein localises to the chloroplast. It catalyses the reaction sulfate(out) + ATP + H2O = sulfate(in) + ADP + phosphate + H(+). The enzyme catalyses thiosulfate(out) + ATP + H2O = thiosulfate(in) + ADP + phosphate + H(+). In terms of biological role, part of the ABC transporter complex involved in sulfate/thiosulfate import. Responsible for energy coupling to the transport system. The chain is Sulfate/thiosulfate import ATP-binding protein CysA from Anthoceros angustus (Hornwort).